A 311-amino-acid polypeptide reads, in one-letter code: Quinolinate synthase (311 aa).

Iminosuccinate-binding residues include H25 and S42. Residue C87 coordinates [4Fe-4S] cluster. Iminosuccinate-binding positions include 113–115 (YIN) and S130. Position 175 (C175) interacts with [4Fe-4S] cluster. Residues 201 to 203 (HPE) and T218 contribute to the iminosuccinate site. C268 provides a ligand contact to [4Fe-4S] cluster.

Belongs to the quinolinate synthase family. Type 2 subfamily. It depends on [4Fe-4S] cluster as a cofactor.

It is found in the cytoplasm. The catalysed reaction is iminosuccinate + dihydroxyacetone phosphate = quinolinate + phosphate + 2 H2O + H(+). The protein operates within cofactor biosynthesis; NAD(+) biosynthesis; quinolinate from iminoaspartate: step 1/1. Its function is as follows. Catalyzes the condensation of iminoaspartate with dihydroxyacetone phosphate to form quinolinate. The polypeptide is Quinolinate synthase (Saccharolobus solfataricus (strain ATCC 35092 / DSM 1617 / JCM 11322 / P2) (Sulfolobus solfataricus)).